Reading from the N-terminus, the 260-residue chain is Thrombin-like enzyme gloshedobin (260 aa).

A signal peptide spans 1–18 (MVLIRVQANLLILQLSYA). Residues 19–24 (QKSSEL) constitute a propeptide that is removed on maturation. One can recognise a Peptidase S1 domain in the interval 25-252 (IIGGDECNIN…TEWIQSIIAG (228 aa)). Disulfide bonds link Cys-31/Cys-165, Cys-52/Cys-68, Cys-100/Cys-258, Cys-144/Cys-212, Cys-176/Cys-191, and Cys-202/Cys-227. Catalysis depends on charge relay system residues His-67 and Asp-112. N-linked (GlcNAc...) asparagine glycosylation is found at Asn-123 and Asn-124. The active-site Charge relay system is Ser-206.

Belongs to the peptidase S1 family. Snake venom subfamily. Monomer. As to expression, expressed by the venom gland.

It localises to the secreted. Its activity is regulated as follows. Completely inhibited by PMSF, and N-tosyl-Lphenylalanine chloromethyl ketone (TPCK) and poorly inhibited by benzamidine and derivates. Not inhibited by EDTA, heparin and hirudin. Thrombin-like snake venom serine protease. The recombinant form clots fibrinogen by cleaving fibrinogen Aalpha chain (FGA), and slowly Bbeta chain (FGB). Has amidolytic activities. The sequence is that of Thrombin-like enzyme gloshedobin from Gloydius shedaoensis (Shedao island pit viper).